Here is a 206-residue protein sequence, read N- to C-terminus: Probable GTP-binding protein EngB (206 aa).

The region spanning 7-195 (DCDEVVLLGR…EEALQAIFSD (189 aa)) is the EngB-type G domain. Residues 15–22 (GRSNVGKS), 41–45 (GVTRS), 60–63 (DLPG), 140–143 (NKID), and 175–177 (ISA) contribute to the GTP site. Serine 22 and threonine 43 together coordinate Mg(2+).

Belongs to the TRAFAC class TrmE-Era-EngA-EngB-Septin-like GTPase superfamily. EngB GTPase family. The cofactor is Mg(2+).

In terms of biological role, necessary for normal cell division and for the maintenance of normal septation. The protein is Probable GTP-binding protein EngB of Haloquadratum walsbyi (strain DSM 16790 / HBSQ001).